The primary structure comprises 946 residues: C-1-tetrahydrofolate synthase, cytoplasmic (946 aa).

Positions 2 to 319 are methylenetetrahydrofolate dehydrogenase and cyclohydrolase; sequence AGQVLDGKAC…PPLPLKLLTP (318 aa). Residues 51-55 and 98-100 contribute to the substrate site; these read YVRMK and VQL. 169 to 171 lines the NADP(+) pocket; the sequence is GRS. A Phosphoserine modification is found at Ser-176. Residue Ser-194 participates in NADP(+) binding. 277-281 serves as a coordination point for substrate; the sequence is PGGVG. The residue at position 318 (Thr-318) is a Phosphothreonine. The interval 320 to 946 is formyltetrahydrofolate synthetase; sequence VPSDIDISRA…DDDGEIDGLF (627 aa). At Ser-322 the chain carries Phosphoserine. Residue 384–391 coordinates ATP; the sequence is TPLGEGKS.

In the N-terminal section; belongs to the tetrahydrofolate dehydrogenase/cyclohydrolase family. This sequence in the C-terminal section; belongs to the formate--tetrahydrofolate ligase family. Homodimer.

It localises to the cytoplasm. The protein localises to the nucleus. The enzyme catalyses (6R)-5,10-methylene-5,6,7,8-tetrahydrofolate + NADP(+) = (6R)-5,10-methenyltetrahydrofolate + NADPH. It catalyses the reaction (6R)-5,10-methenyltetrahydrofolate + H2O = (6R)-10-formyltetrahydrofolate + H(+). The catalysed reaction is (6S)-5,6,7,8-tetrahydrofolate + formate + ATP = (6R)-10-formyltetrahydrofolate + ADP + phosphate. It participates in one-carbon metabolism; tetrahydrofolate interconversion. Cytoplasmic isozyme of C-1-tetrahydrofolate synthase. The trifunctional enzyme catalyzes the interconversion of the one-carbon derivatives of tetrahydrofolate (THF) between different oxidation states by the enzymatic activities 10-formyltetrahydrofolate synthetase, 5,lO-methenyltetrahydrofolate cyclohydrolase, and 5,lO-methylenetetrahydrofolate dehydrogenase. Involved in the generation of one-carbon intermediates in the biosynthesis of the purine bases. In Saccharomyces cerevisiae (strain ATCC 204508 / S288c) (Baker's yeast), this protein is C-1-tetrahydrofolate synthase, cytoplasmic (ADE3).